The chain runs to 198 residues: Holliday junction branch migration complex subunit RuvA (198 aa).

The segment at 1–63 (MYDYIKGQLT…EDAHLLFGFH (63 aa)) is domain I. Residues 64-142 (TEDEKDVFLK…EAPQETGHTK (79 aa)) form a domain II region. Positions 143-147 (ARSNK) are flexible linker. The segment at 148-198 (AGNTQLDEAIEALLALGYTATELKKIRAFFEGTSETAEQYIKSALKLLMKG) is domain III.

The protein belongs to the RuvA family. Homotetramer. Forms an RuvA(8)-RuvB(12)-Holliday junction (HJ) complex. HJ DNA is sandwiched between 2 RuvA tetramers; dsDNA enters through RuvA and exits via RuvB. An RuvB hexamer assembles on each DNA strand where it exits the tetramer. Each RuvB hexamer is contacted by two RuvA subunits (via domain III) on 2 adjacent RuvB subunits; this complex drives branch migration. In the full resolvosome a probable DNA-RuvA(4)-RuvB(12)-RuvC(2) complex forms which resolves the HJ.

Its subcellular location is the cytoplasm. Functionally, the RuvA-RuvB-RuvC complex processes Holliday junction (HJ) DNA during genetic recombination and DNA repair, while the RuvA-RuvB complex plays an important role in the rescue of blocked DNA replication forks via replication fork reversal (RFR). RuvA specifically binds to HJ cruciform DNA, conferring on it an open structure. The RuvB hexamer acts as an ATP-dependent pump, pulling dsDNA into and through the RuvAB complex. HJ branch migration allows RuvC to scan DNA until it finds its consensus sequence, where it cleaves and resolves the cruciform DNA. This chain is Holliday junction branch migration complex subunit RuvA, found in Streptococcus pyogenes serotype M49 (strain NZ131).